The sequence spans 421 residues: Histidine--tRNA ligase (421 aa).

It belongs to the class-II aminoacyl-tRNA synthetase family. Homodimer.

The protein localises to the cytoplasm. The catalysed reaction is tRNA(His) + L-histidine + ATP = L-histidyl-tRNA(His) + AMP + diphosphate + H(+). This is Histidine--tRNA ligase from Coxiella burnetii (strain Dugway 5J108-111).